Reading from the N-terminus, the 357-residue chain is Arginine kinase (357 aa).

The 83-residue stretch at 9-91 (KLEAGFKKLQ…FDPIIDDYHG (83 aa)) folds into the Phosphagen kinase N-terminal domain. 64 to 68 (GVGIY) is a substrate binding site. In terms of domain architecture, Phosphagen kinase C-terminal spans 119–356 (FIISTRVRCG…LEMIKMEKAA (238 aa)). ATP-binding positions include 122-126 (STRVR) and histidine 185. Residue glutamate 225 participates in substrate binding. Arginine 229 lines the ATP pocket. A substrate-binding site is contributed by cysteine 271. ATP-binding positions include 280 to 284 (RASVH) and 309 to 314 (RGTRGE). A substrate-binding site is contributed by glutamate 314.

It belongs to the ATP:guanido phosphotransferase family. In terms of assembly, monomer.

It localises to the cytoplasm. It carries out the reaction L-arginine + ATP = N(omega)-phospho-L-arginine + ADP + H(+). In terms of biological role, catalyzes the reversible transfer of the terminal phosphoryl group of ATP to L-arginine. The chain is Arginine kinase from Limulus polyphemus (Atlantic horseshoe crab).